Consider the following 536-residue polypeptide: SNW domain-containing protein 1 (536 aa).

Positions 1–46 (MALTSFLPAPTQLSQDQLEAEEKARSQRSRQTSLVSSRREPPPYGY) are disordered. Residue Ala2 is modified to N-acetylalanine. Ser14 carries the phosphoserine modification. Lys23 is covalently cross-linked (Glycyl lysine isopeptide (Lys-Gly) (interchain with G-Cter in SUMO2)). The interaction with PPIL1 stretch occupies residues 59 to 79 (GDGGAFPEIHVAQYPLDMGRK). Residues Lys81, Lys97, Lys115, Lys122, Lys141, Lys158, and Lys170 each participate in a glycyl lysine isopeptide (Lys-Gly) (interchain with G-Cter in SUMO2) cross-link. The SNW stretch occupies residues 174 to 339 (AQYIRYTPSQ…KARERRAGIK (166 aa)). 2 positions are modified to phosphoserine: Ser182 and Ser190. Lys193 is covalently cross-linked (Glycyl lysine isopeptide (Lys-Gly) (interchain with G-Cter in SUMO2)). The disordered stretch occupies residues 209–233 (PPRFKINKKIPRGPPSPPAPVMHSP). 3 positions are modified to phosphoserine: Ser224, Ser232, and Ser234. Glycyl lysine isopeptide (Lys-Gly) (interchain with G-Cter in SUMO2) cross-links involve residues Lys240, Lys258, Lys286, Lys339, Lys344, Lys416, Lys441, and Lys452. The tract at residues 311–386 (KMAQKEKEKH…RSKLQRNENR (76 aa)) is disordered. Composition is skewed to basic and acidic residues over residues 472-489 (FVPD…RGRE) and 503-530 (KFLE…EHEG). The disordered stretch occupies residues 472-536 (FVPDKEFSGS…EHEGKKRRKE (65 aa)). Phosphoserine is present on residues Ser479 and Ser481. Lys509 is covalently cross-linked (Glycyl lysine isopeptide (Lys-Gly) (interchain with G-Cter in SUMO2)).

This sequence belongs to the SNW family. Identified in the spliceosome C complex. Associates with U4/U6-U5 tri-small nuclear ribonucleoproteins (U4/U6-U5 tri-snRNPs). Component of the minor spliceosome, which splices U12-type introns. Interacts with SKI, SMAD2,SMAD3, RBPJ, RB1, PABPN1, MAGEA1, SIRT1, FOXN3, U2AF2, PPIL1, DAXX and ATP1B4. Interacts with VDR and RXRA; preferentially associates with VDR:RXRA heterodimers. Interacts with NCOR2. Interacts with MAML1. Interacts with NOTCH1 NICD; the interaction involves multimerized NOTCH1 NICD. Forms a complex with NOTCH1 NICD and MAML1; the association is dissociated by RBPJ. Associates with positive transcription elongation factor b (P-TEFb). Component of the SNARP complex which consists at least of SNIP1, SNW1, THRAP3, BCLAF1 and PNN.

The protein localises to the nucleus. Functionally, involved in pre-mRNA splicing as component of the spliceosome. As a component of the minor spliceosome, involved in the splicing of U12-type introns in pre-mRNAs. Required in the specific splicing of CDKN1A pre-mRNA; the function probably involves the recruitment of U2AF2 to the mRNA. May recruit PPIL1 to the spliceosome. May be involved in cyclin-D1/CCND1 mRNA stability through the SNARP complex which associates with both the 3'end of the CCND1 gene and its mRNA. Involved in transcriptional regulation. Modulates TGF-beta-mediated transcription via association with SMAD proteins, MYOD1-mediated transcription via association with PABPN1, RB1-mediated transcriptional repression, and retinoid-X receptor (RXR)- and vitamin D receptor (VDR)-dependent gene transcription in a cell line-specific manner probably involving coactivators NCOA1 and GRIP1. Is involved in NOTCH1-mediated transcriptional activation. Binds to multimerized forms of Notch intracellular domain (NICD) and is proposed to recruit transcriptional coactivators such as MAML1 to form an intermediate preactivation complex which associates with DNA-bound CBF-1/RBPJ to form a transcriptional activation complex by releasing SNW1 and redundant NOTCH1 NICD. This chain is SNW domain-containing protein 1 (SNW1), found in Bos taurus (Bovine).